A 72-amino-acid polypeptide reads, in one-letter code: Translation initiation factor IF-1 (72 aa).

Positions 1 to 72 (MAKEDCIEME…SKGRIIYRAR (72 aa)) constitute an S1-like domain.

Belongs to the IF-1 family. As to quaternary structure, component of the 30S ribosomal translation pre-initiation complex which assembles on the 30S ribosome in the order IF-2 and IF-3, IF-1 and N-formylmethionyl-tRNA(fMet); mRNA recruitment can occur at any time during PIC assembly.

It is found in the cytoplasm. One of the essential components for the initiation of protein synthesis. Stabilizes the binding of IF-2 and IF-3 on the 30S subunit to which N-formylmethionyl-tRNA(fMet) subsequently binds. Helps modulate mRNA selection, yielding the 30S pre-initiation complex (PIC). Upon addition of the 50S ribosomal subunit IF-1, IF-2 and IF-3 are released leaving the mature 70S translation initiation complex. The sequence is that of Translation initiation factor IF-1 from Pseudoalteromonas atlantica (strain T6c / ATCC BAA-1087).